We begin with the raw amino-acid sequence, 389 residues long: Migration and invasion-inhibitory protein (389 aa).

Low complexity predominate over residues Leu44 to Glu54. Disordered stretches follow at residues Leu44–Leu80 and Lys131–Pro150. A compositionally biased stretch (polar residues) spans Ser58–Ser70. Positions Gln71–Leu80 are enriched in basic and acidic residues. Ser309 carries the post-translational modification Phosphoserine.

Interacts with IGFBP2.

Inhibits glioma cells invasion and down-regulates adhesion- and motility-associated genes such as NFKB2 and ICAM1. Exhibits opposing effects to IGFBP2 on cell invasion. The chain is Migration and invasion-inhibitory protein (Miip) from Rattus norvegicus (Rat).